The chain runs to 328 residues: Ubiquitin-conjugating enzyme E2 Z (328 aa).

Residues 71–225 (QCILRIKRDI…IRHETMRVAV (155 aa)) enclose the UBC core domain. Cys-160 acts as the Glycyl thioester intermediate in catalysis. Residues 295-328 (RLREKCPPEDNDGDSDSDTSSSGTDPDSQGSSQP) form a disordered region. Low complexity predominate over residues 312-328 (DTSSSGTDPDSQGSSQP).

It belongs to the ubiquitin-conjugating enzyme family.

The protein localises to the cytoplasm. It localises to the nucleus. The catalysed reaction is S-ubiquitinyl-[E1 ubiquitin-activating enzyme]-L-cysteine + [E2 ubiquitin-conjugating enzyme]-L-cysteine = [E1 ubiquitin-activating enzyme]-L-cysteine + S-ubiquitinyl-[E2 ubiquitin-conjugating enzyme]-L-cysteine.. It participates in protein modification; protein ubiquitination. In terms of biological role, catalyzes the covalent attachment of ubiquitin to other proteins. May be involved in apoptosis regulation. This chain is Ubiquitin-conjugating enzyme E2 Z (ube2z), found in Danio rerio (Zebrafish).